A 160-amino-acid polypeptide reads, in one-letter code: UPF0262 protein BCAN_A0255 (160 aa).

This sequence belongs to the UPF0262 family.

In Brucella canis (strain ATCC 23365 / NCTC 10854 / RM-666), this protein is UPF0262 protein BCAN_A0255.